The chain runs to 352 residues: UDP-N-acetylglucosamine--N-acetylmuramyl-(pentapeptide) pyrophosphoryl-undecaprenol N-acetylglucosamine transferase (352 aa).

Residues 12–14 (TGG), N124, R160, S188, and Q287 contribute to the UDP-N-acetyl-alpha-D-glucosamine site.

The protein belongs to the glycosyltransferase 28 family. MurG subfamily.

It localises to the cell inner membrane. The enzyme catalyses di-trans,octa-cis-undecaprenyl diphospho-N-acetyl-alpha-D-muramoyl-L-alanyl-D-glutamyl-meso-2,6-diaminopimeloyl-D-alanyl-D-alanine + UDP-N-acetyl-alpha-D-glucosamine = di-trans,octa-cis-undecaprenyl diphospho-[N-acetyl-alpha-D-glucosaminyl-(1-&gt;4)]-N-acetyl-alpha-D-muramoyl-L-alanyl-D-glutamyl-meso-2,6-diaminopimeloyl-D-alanyl-D-alanine + UDP + H(+). Its pathway is cell wall biogenesis; peptidoglycan biosynthesis. In terms of biological role, cell wall formation. Catalyzes the transfer of a GlcNAc subunit on undecaprenyl-pyrophosphoryl-MurNAc-pentapeptide (lipid intermediate I) to form undecaprenyl-pyrophosphoryl-MurNAc-(pentapeptide)GlcNAc (lipid intermediate II). The sequence is that of UDP-N-acetylglucosamine--N-acetylmuramyl-(pentapeptide) pyrophosphoryl-undecaprenol N-acetylglucosamine transferase from Dechloromonas aromatica (strain RCB).